Reading from the N-terminus, the 222-residue chain is Cytidylate kinase (222 aa).

11 to 19 (GPSGSGKST) serves as a coordination point for ATP.

The protein belongs to the cytidylate kinase family. Type 1 subfamily.

It is found in the cytoplasm. It catalyses the reaction CMP + ATP = CDP + ADP. The catalysed reaction is dCMP + ATP = dCDP + ADP. The polypeptide is Cytidylate kinase (Ureaplasma urealyticum serovar 10 (strain ATCC 33699 / Western)).